The chain runs to 398 residues: Ribosomal RNA large subunit methyltransferase I (398 aa).

The region spanning 2–79 (SVRLVLAKGR…LSESIDIAFF (78 aa)) is the PUA domain.

It belongs to the methyltransferase superfamily. RlmI family.

It localises to the cytoplasm. It carries out the reaction cytidine(1962) in 23S rRNA + S-adenosyl-L-methionine = 5-methylcytidine(1962) in 23S rRNA + S-adenosyl-L-homocysteine + H(+). In terms of biological role, specifically methylates the cytosine at position 1962 (m5C1962) of 23S rRNA. The protein is Ribosomal RNA large subunit methyltransferase I of Shigella dysenteriae serotype 1 (strain Sd197).